A 241-amino-acid polypeptide reads, in one-letter code: DNA repair protein RecO (241 aa).

The protein belongs to the RecO family.

Its function is as follows. Involved in DNA repair and RecF pathway recombination. The chain is DNA repair protein RecO from Xanthomonas campestris pv. campestris (strain B100).